Consider the following 1088-residue polypeptide: Exportin-T (1088 aa).

Residues 435–503 (KNNNNKNKNT…VKNANNIKNN (69 aa)) are compositionally biased toward low complexity. Disordered regions lie at residues 435 to 513 (KNNN…DDDD) and 1059 to 1088 (LNNN…KNGH).

The protein belongs to the exportin family.

It localises to the nucleus. The protein resides in the cytoplasm. Functionally, mediates the nuclear export of aminoacylated tRNAs. This is Exportin-T (xpot) from Dictyostelium discoideum (Social amoeba).